A 102-amino-acid chain; its full sequence is NADH-quinone oxidoreductase subunit K (102 aa).

3 helical membrane-spanning segments follow: residues 6 to 26, 30 to 50, and 63 to 83; these read LIAMMILAAGLFAIGLFGVLA, IMFQLVALEVALSGPALGFVA, and MFILVLTLAAAEVAVGLALFL.

The protein belongs to the complex I subunit 4L family. NDH-1 is composed of 14 different subunits. Subunits NuoA, H, J, K, L, M, N constitute the membrane sector of the complex.

It is found in the cell inner membrane. It catalyses the reaction a quinone + NADH + 5 H(+)(in) = a quinol + NAD(+) + 4 H(+)(out). In terms of biological role, NDH-1 shuttles electrons from NADH, via FMN and iron-sulfur (Fe-S) centers, to quinones in the respiratory chain. The immediate electron acceptor for the enzyme in this species is believed to be ubiquinone. Couples the redox reaction to proton translocation (for every two electrons transferred, four hydrogen ions are translocated across the cytoplasmic membrane), and thus conserves the redox energy in a proton gradient. The protein is NADH-quinone oxidoreductase subunit K of Rhodopseudomonas palustris (strain BisB5).